Reading from the N-terminus, the 725-residue chain is Phosphoribosylformylglycinamidine synthase subunit PurL (725 aa).

The active site involves H34. Y37 contributes to the ATP binding site. E93 is a Mg(2+) binding site. Substrate contacts are provided by residues 94 to 97 and R116; that span reads SHNH. The active-site Proton acceptor is H95. D117 contacts Mg(2+). The tract at residues 220 to 241 is disordered; it reads GASFASEDLSEDAETEDRPAVQ. Position 241 (Q241) interacts with substrate. Residue D269 participates in Mg(2+) binding. Residue 313-315 coordinates substrate; it reads ESQ. D489 and G526 together coordinate ATP. Mg(2+) is bound at residue N527. S529 contributes to the substrate binding site.

It belongs to the FGAMS family. As to quaternary structure, monomer. Part of the FGAM synthase complex composed of 1 PurL, 1 PurQ and 2 PurS subunits.

Its subcellular location is the cytoplasm. It catalyses the reaction N(2)-formyl-N(1)-(5-phospho-beta-D-ribosyl)glycinamide + L-glutamine + ATP + H2O = 2-formamido-N(1)-(5-O-phospho-beta-D-ribosyl)acetamidine + L-glutamate + ADP + phosphate + H(+). It functions in the pathway purine metabolism; IMP biosynthesis via de novo pathway; 5-amino-1-(5-phospho-D-ribosyl)imidazole from N(2)-formyl-N(1)-(5-phospho-D-ribosyl)glycinamide: step 1/2. Part of the phosphoribosylformylglycinamidine synthase complex involved in the purines biosynthetic pathway. Catalyzes the ATP-dependent conversion of formylglycinamide ribonucleotide (FGAR) and glutamine to yield formylglycinamidine ribonucleotide (FGAM) and glutamate. The FGAM synthase complex is composed of three subunits. PurQ produces an ammonia molecule by converting glutamine to glutamate. PurL transfers the ammonia molecule to FGAR to form FGAM in an ATP-dependent manner. PurS interacts with PurQ and PurL and is thought to assist in the transfer of the ammonia molecule from PurQ to PurL. The protein is Phosphoribosylformylglycinamidine synthase subunit PurL of Haloquadratum walsbyi (strain DSM 16790 / HBSQ001).